Reading from the N-terminus, the 322-residue chain is Acetyl-coenzyme A carboxylase carboxyl transferase subunit alpha (322 aa).

Residues 39–293 enclose the CoA carboxyltransferase C-terminal domain; it reads RLAAKSQQLT…KRALAESLRQ (255 aa).

It belongs to the AccA family. Acetyl-CoA carboxylase is a heterohexamer composed of biotin carboxyl carrier protein (AccB), biotin carboxylase (AccC) and two subunits each of ACCase subunit alpha (AccA) and ACCase subunit beta (AccD).

It localises to the cytoplasm. The enzyme catalyses N(6)-carboxybiotinyl-L-lysyl-[protein] + acetyl-CoA = N(6)-biotinyl-L-lysyl-[protein] + malonyl-CoA. It functions in the pathway lipid metabolism; malonyl-CoA biosynthesis; malonyl-CoA from acetyl-CoA: step 1/1. Component of the acetyl coenzyme A carboxylase (ACC) complex. First, biotin carboxylase catalyzes the carboxylation of biotin on its carrier protein (BCCP) and then the CO(2) group is transferred by the carboxyltransferase to acetyl-CoA to form malonyl-CoA. This chain is Acetyl-coenzyme A carboxylase carboxyl transferase subunit alpha, found in Ralstonia nicotianae (strain ATCC BAA-1114 / GMI1000) (Ralstonia solanacearum).